A 352-amino-acid chain; its full sequence is MTITIGQYVEKRGLFDNVDDWLRRERFVFVGWSGLLLFPCAYMALGGWLTGTTFVTSWYTHGLATSYLEGCNFLTAAVSTPANSMAHSLLFLWGPEAQGDLTRWFQLGGLWPFVALHGAFSLIGFMLRQFEIAQSLKLRPYNAIAFSAPIAVFVSVFLIYPLGQAGWFFAPSFGVAAIFRFILFFQGFHNWTLNPFHMMGVAGVLGAALLCAIHGATVENTLFEDGDGANTFRAFNPTQAEETYSMVTANRFWSQIFGVAFSNKRWLHFFMLFVPVTGLWMSAIGVVGLALNLRAYDFVSQEIRAAEDPEFETFYTKNILLNEGIRAWMAAQDQPHEKLTFPEEVLPRGNAL.

Threonine 2 bears the N-acetylthreonine mark. Phosphothreonine is present on threonine 2. A helical membrane pass occupies residues 40 to 60 (CAYMALGGWLTGTTFVTSWYT). Chlorophyll a is bound at residue histidine 117. Residues 124-140 (GFMLRQFEIAQSLKLRP) form a helical membrane-spanning segment. 2 residues coordinate pheophytin a: glutamine 129 and asparagine 142. The helical transmembrane segment at 152–165 (VFVSVFLIYPLGQA) threads the bilayer. Chlorophyll a is bound at residue histidine 197. Residues 207–227 (AALLCAIHGATVENTLFEDGD) form a helical membrane-spanning segment. Positions 214 and 261 each coordinate a plastoquinone. Residue histidine 214 participates in Fe cation binding. Histidine 268 provides a ligand contact to Fe cation. The helical transmembrane segment at 278–294 (GLWMSAIGVVGLALNLR) threads the bilayer.

It belongs to the reaction center PufL/M/PsbA/D family. In terms of assembly, PSII is composed of 1 copy each of membrane proteins PsbA, PsbB, PsbC, PsbD, PsbE, PsbF, PsbH, PsbI, PsbJ, PsbK, PsbL, PsbM, PsbT, PsbX, PsbY, PsbZ, Psb30/Ycf12, at least 3 peripheral proteins of the oxygen-evolving complex and a large number of cofactors. It forms dimeric complexes. Requires The D1/D2 heterodimer binds P680, chlorophylls that are the primary electron donor of PSII, and subsequent electron acceptors. It shares a non-heme iron and each subunit binds pheophytin, quinone, additional chlorophylls, carotenoids and lipids. There is also a Cl(-1) ion associated with D1 and D2, which is required for oxygen evolution. The PSII complex binds additional chlorophylls, carotenoids and specific lipids. as cofactor.

The protein localises to the plastid. Its subcellular location is the chloroplast thylakoid membrane. The enzyme catalyses 2 a plastoquinone + 4 hnu + 2 H2O = 2 a plastoquinol + O2. Its function is as follows. Photosystem II (PSII) is a light-driven water:plastoquinone oxidoreductase that uses light energy to abstract electrons from H(2)O, generating O(2) and a proton gradient subsequently used for ATP formation. It consists of a core antenna complex that captures photons, and an electron transfer chain that converts photonic excitation into a charge separation. The D1/D2 (PsbA/PsbD) reaction center heterodimer binds P680, the primary electron donor of PSII as well as several subsequent electron acceptors. D2 is needed for assembly of a stable PSII complex. The sequence is that of Photosystem II D2 protein from Stigeoclonium helveticum (Green alga).